The primary structure comprises 410 residues: Protein LTV1 homolog (410 aa).

Disordered regions lie at residues 142–165 (VYRS…DEMY) and 325–378 (EMDI…ARKL). 2 stretches are compositionally biased toward acidic residues: residues 151–165 (DSEE…DEMY) and 325–345 (EMDI…DDDK). A compositionally biased stretch (basic and acidic residues) spans 357–366 (PKNETPEQRS). Positions 363-389 (EQRSLRKKAVKEARKLRRVEKKANKTM) form a coiled coil. A compositionally biased stretch (basic residues) spans 367 to 378 (LRKKAVKEARKL).

The protein belongs to the LTV1 family.

This is Protein LTV1 homolog from Caenorhabditis elegans.